A 205-amino-acid chain; its full sequence is GTP cyclohydrolase-2 (205 aa).

49–53 (RIHSE) lines the GTP pocket. Zn(2+) is bound by residues cysteine 54, cysteine 65, and cysteine 67. Residues glutamine 70, 92–94 (EGR), and threonine 114 each bind GTP. The active-site Proton acceptor is aspartate 126. Arginine 128 (nucleophile) is an active-site residue. Positions 149 and 154 each coordinate GTP.

The protein belongs to the GTP cyclohydrolase II family. Zn(2+) serves as cofactor.

It carries out the reaction GTP + 4 H2O = 2,5-diamino-6-hydroxy-4-(5-phosphoribosylamino)-pyrimidine + formate + 2 phosphate + 3 H(+). The protein operates within cofactor biosynthesis; riboflavin biosynthesis; 5-amino-6-(D-ribitylamino)uracil from GTP: step 1/4. Catalyzes the conversion of GTP to 2,5-diamino-6-ribosylamino-4(3H)-pyrimidinone 5'-phosphate (DARP), formate and pyrophosphate. The protein is GTP cyclohydrolase-2 of Shewanella amazonensis (strain ATCC BAA-1098 / SB2B).